The chain runs to 222 residues: Peptide methionine sulfoxide reductase MsrA (222 aa).

Cysteine 55 is an active-site residue.

Belongs to the MsrA Met sulfoxide reductase family.

The catalysed reaction is L-methionyl-[protein] + [thioredoxin]-disulfide + H2O = L-methionyl-(S)-S-oxide-[protein] + [thioredoxin]-dithiol. It catalyses the reaction [thioredoxin]-disulfide + L-methionine + H2O = L-methionine (S)-S-oxide + [thioredoxin]-dithiol. Has an important function as a repair enzyme for proteins that have been inactivated by oxidation. Catalyzes the reversible oxidation-reduction of methionine sulfoxide in proteins to methionine. In Streptomyces griseus subsp. griseus (strain JCM 4626 / CBS 651.72 / NBRC 13350 / KCC S-0626 / ISP 5235), this protein is Peptide methionine sulfoxide reductase MsrA.